The primary structure comprises 588 residues: Snake venom 5'-nucleotidase (588 aa).

Residues Met1 to Gly40 form the signal peptide. Zn(2+) contacts are provided by Asp51 and His53. Cys66 and Cys71 are disulfide-bonded. N-linked (GlcNAc...) asparagine glycosylation occurs at Asn88. The Zn(2+) site is built by Asp99 and Asn131. An N-linked (GlcNAc...) asparagine glycan is attached at Asn167. Positions 234 and 257 each coordinate Zn(2+). Asn327, Asn347, and Asn361 each carry an N-linked (GlcNAc...) asparagine glycan. Intrachain disulfides connect Cys367–Cys372 and Cys379–Cys401. AMP is bound at residue Arg368. AMP is bound by residues Asn404 and Arg409. N-linked (GlcNAc...) asparagine glycosylation occurs at Asn418. AMP is bound at residue Phe432. Cys491 and Cys494 are oxidised to a cystine. 2 residues coordinate AMP: Phe515 and Asp521. Residue Asn532 is glycosylated (N-linked (GlcNAc...) asparagine). Ser564 carries the GPI-anchor amidated serine lipid modification. A propeptide spans Ala565–Leu588 (removed in mature form).

Belongs to the 5'-nucleotidase family. Zn(2+) serves as cofactor. Venom 5'-nucleotidases (or a part thereof) may be released into the venom via exosome-like vesicles. They may be attached via a GPI anchor to the membrane of these vesicles. Soluble forms of 5'-nucleotidase might be released by cleavage of the ectodomain in the exosome-like vesicles or venom gland cells. Expressed by the venom gland.

The protein localises to the membrane. It catalyses the reaction a ribonucleoside 5'-phosphate + H2O = a ribonucleoside + phosphate. Its function is as follows. Hydrolyzes nucleotides into nucleosides. Snake venom 5'-nucleotidases are widely distributed among venomous snake taxa, but there is a lack of information about their biological activities. They have been shown to inhibit platelet aggregation. This effect may be due to the liberation of inhibitory AMP or adenosine by its action on ADP released upon initiation of aggregation. Venom 5'-nucleotidases are also known to synergistically act in vivo with other toxins like ADPases, phospholipases, and disintegrins to exert a more pronounced anti-coagulant effect. The sequence is that of Snake venom 5'-nucleotidase from Gloydius brevicauda (Korean slamosa snake).